Reading from the N-terminus, the 133-residue chain is Ribonuclease VapC28 (133 aa).

Residues 1–124 (MIVDTSAIIA…LWKGNDFGHT (124 aa)) form the PINc domain. 2 residues coordinate Mg(2+): Asp-4 and Asp-100.

It belongs to the PINc/VapC protein family. Requires Mg(2+) as cofactor.

Functionally, toxic component of a type II toxin-antitoxin (TA) system. An RNase. Upon expression in M.smegmatis inhibits colony formation. Its toxic effect is neutralized by coexpression with cognate antitoxin VapB28. The chain is Ribonuclease VapC28 from Mycobacterium tuberculosis (strain ATCC 25618 / H37Rv).